Reading from the N-terminus, the 201-residue chain is dTTP/UTP pyrophosphatase (201 aa).

D81 acts as the Proton acceptor in catalysis.

Belongs to the Maf family. YhdE subfamily. A divalent metal cation serves as cofactor.

Its subcellular location is the cytoplasm. The catalysed reaction is dTTP + H2O = dTMP + diphosphate + H(+). The enzyme catalyses UTP + H2O = UMP + diphosphate + H(+). Its function is as follows. Nucleoside triphosphate pyrophosphatase that hydrolyzes dTTP and UTP. May have a dual role in cell division arrest and in preventing the incorporation of modified nucleotides into cellular nucleic acids. The polypeptide is dTTP/UTP pyrophosphatase (Bordetella avium (strain 197N)).